The primary structure comprises 660 residues: DNA ligase (660 aa).

Residues 33–37, 82–83, and glutamate 110 contribute to the NAD(+) site; these read DFVYD and SL. Lysine 112 functions as the N6-AMP-lysine intermediate in the catalytic mechanism. Residues arginine 133, glutamate 167, lysine 281, and lysine 305 each contribute to the NAD(+) site. The Zn(2+) site is built by cysteine 396, cysteine 399, cysteine 412, and cysteine 417. The region spanning 583-660 is the BRCT domain; that stretch reads GENKLLAGKK…SFEDIKSYLD (78 aa).

Belongs to the NAD-dependent DNA ligase family. LigA subfamily. Requires Mg(2+) as cofactor. Mn(2+) is required as a cofactor.

The enzyme catalyses NAD(+) + (deoxyribonucleotide)n-3'-hydroxyl + 5'-phospho-(deoxyribonucleotide)m = (deoxyribonucleotide)n+m + AMP + beta-nicotinamide D-nucleotide.. DNA ligase that catalyzes the formation of phosphodiester linkages between 5'-phosphoryl and 3'-hydroxyl groups in double-stranded DNA using NAD as a coenzyme and as the energy source for the reaction. It is essential for DNA replication and repair of damaged DNA. This is DNA ligase from Borreliella burgdorferi (strain ZS7) (Borrelia burgdorferi).